Reading from the N-terminus, the 58-residue chain is Ikitoxin (58 aa).

Positions 3–58 constitute an LCN-type CS-alpha/beta domain; sequence VPGNYPLDKDGNTYKCFLLGENEECLNVCKLHGVQYGYCYASKCWCEYLEDDKDSV. 3 disulfide bridges follow: C18–C41, C27–C46, and C31–C48.

As to expression, expressed by the venom gland.

Its subcellular location is the secreted. In terms of biological role, beta toxins bind voltage-independently at site-4 of sodium channels (Nav) and shift the voltage of activation toward more negative potentials thereby affecting sodium channel activation and promoting spontaneous and repetitive firing. Does not produce effect when administered to blowfly and cabbage looper larvae. In mice, does not produce convulsions, tremors, increased ventilation nor death. The chain is Ikitoxin from Parabuthus transvaalicus (Transvaal thick-tailed scorpion).